We begin with the raw amino-acid sequence, 355 residues long: 3,4-dihydroxy-2-butanone 4-phosphate synthase (355 aa).

A DHBP synthase region spans residues 1–202; sequence MYHKRIKEAI…VSDIIQYRLN (202 aa). D-ribulose 5-phosphate is bound by residues 27–28, aspartate 32, 139–143, and glutamate 163; these read RE and RTGHT. Residue glutamate 28 coordinates Mg(2+). Residue histidine 142 coordinates Mg(2+). The tract at residues 203-355 is GTP cyclohydrolase II-like; the sequence is FENLLREITR…NLHLVEKIEV (153 aa).

The protein in the N-terminal section; belongs to the DHBP synthase family. It in the C-terminal section; belongs to the GTP cyclohydrolase II family. Mg(2+) serves as cofactor. Requires Mn(2+) as cofactor.

The enzyme catalyses D-ribulose 5-phosphate = (2S)-2-hydroxy-3-oxobutyl phosphate + formate + H(+). It functions in the pathway cofactor biosynthesis; riboflavin biosynthesis; 2-hydroxy-3-oxobutyl phosphate from D-ribulose 5-phosphate: step 1/1. Its function is as follows. Catalyzes the conversion of D-ribulose 5-phosphate to formate and 3,4-dihydroxy-2-butanone 4-phosphate. The polypeptide is 3,4-dihydroxy-2-butanone 4-phosphate synthase (ribB) (Helicobacter hepaticus (strain ATCC 51449 / 3B1)).